The following is a 249-amino-acid chain: BPI fold-containing family A member 1 (249 aa).

The first 15 residues, 1 to 15, serve as a signal peptide directing secretion; the sequence is MFQVAGLIVFCGLLA. An important for surfactant activity and antibacterial properties region spans residues 81–86; the sequence is LLGGLL. Asparagine 151 carries N-linked (GlcNAc...) asparagine glycosylation. The cysteines at positions 173 and 217 are disulfide-linked.

The protein belongs to the BPI/LBP/Plunc superfamily. Plunc family. As to quaternary structure, monomer. Interacts (via N-terminus) with SCNN1B, a subunit of the heterotrimeric epithelial sodium channel (ENaC); this inhibits proteolytic activation of ENaC. In terms of tissue distribution, expressed in lung and trachea.

It localises to the secreted. Functionally, lipid-binding protein which shows high specificity for the surfactant phospholipid dipalmitoylphosphatidylcholine (DPPC). Plays a role in the innate immune responses of the upper airways. Reduces the surface tension in secretions from airway epithelia and inhibits the formation of biofilm by pathogenic Gram-negative bacteria, such as P.aeruginosa and K.pneumoniae. Negatively regulates proteolytic cleavage of SCNN1G, an event that is required for activation of the epithelial sodium channel (ENaC), and thereby contributes to airway surface liquid homeostasis and proper clearance of mucus. Plays a role in the airway inflammatory response after exposure to irritants. May attract macrophages and neutrophils. The polypeptide is BPI fold-containing family A member 1 (BPIFA1) (Sus scrofa (Pig)).